A 382-amino-acid chain; its full sequence is Telomere-binding protein OPG082 (382 aa).

This sequence belongs to the orthopoxvirus OPG082 family.

It is found in the virion. Binds to the hairpin form of the viral telomeric sequence. Might direct genome encapsidation into the virus particle. The protein is Telomere-binding protein OPG082 (OPG082) of Variola virus (isolate Human/India/Ind3/1967) (VARV).